Here is a 121-residue protein sequence, read N- to C-terminus: Flagellar protein FliT (121 aa).

Residues 1–50 form a required for homodimerization region; that stretch reads MNHAPHLYFAWQQLVEKSQLMLRLATEEQWDELIASEMAYVNAVQEIAHL. The interval 60 to 98 is fliD binding; sequence MQEQLRPMLRLILDNESKVKQLLQIRMDELAKLVGQSSV.

Belongs to the FliT family. In terms of assembly, homodimer. Interacts with FliD and FlhC.

The protein localises to the cytoplasm. It is found in the cytosol. In terms of biological role, dual-function protein that regulates the transcription of class 2 flagellar operons and that also acts as an export chaperone for the filament-capping protein FliD. As a transcriptional regulator, acts as an anti-FlhDC factor; it directly binds FlhC, thus inhibiting the binding of the FlhC/FlhD complex to class 2 promoters, resulting in decreased expression of class 2 flagellar operons. As a chaperone, effects FliD transition to the membrane by preventing its premature polymerization, and by directing it to the export apparatus. The chain is Flagellar protein FliT from Escherichia coli O8 (strain IAI1).